The following is an 80-amino-acid chain: Serine palmitoyltransferase small subunit A-A (80 aa).

Over 1–21 (MKVLCEDVNGPRSSLGRAWSH) the chain is Cytoplasmic. A helical membrane pass occupies residues 22–38 (MSWLYYQYLLVTALYML). Topologically, residues 39 to 43 (EPWER) are lumenal. Residues 44–66 (TVFNSMLVSIVGMALYTGYIFMP) traverse the membrane as a helical segment. Residues 67–80 (QHILAILHYFEIVQ) lie on the Cytoplasmic side of the membrane.

It belongs to the SPTSS family. SPTSSA subfamily. Component of the serine palmitoyltransferase (SPT) complex, which is composed of SPTLC1, SPTLC2 or SPTLC3 and SPTSSA or SPTSSB. The heterodimer consisting of SPTLC1 and SPTLC2/SPTLC3 forms the catalytic core of the enzyme, while SPTSSA or SPTSSB subunits determine substrate specificity. SPT also interacts with ORMDL proteins, especially ORMDL3, which negatively regulate SPT activity in the presence of ceramides.

It localises to the endoplasmic reticulum membrane. It participates in lipid metabolism; sphingolipid metabolism. In terms of biological role, component of the serine palmitoyltransferase multisubunit enzyme (SPT) that catalyzes the initial and rate-limiting step in sphingolipid biosynthesis by condensing L-serine and activated acyl-CoA (most commonly palmitoyl-CoA) to form long-chain bases. The SPT complex is composed of SPTLC1, SPTLC2 or SPTLC3 and SPTSSA or SPTSSB. Within this complex, the heterodimer consisting of SPTLC1 and SPTLC2/SPTLC3 forms the catalytic core. Within the SPT complex, SPTSSA stimulates the catalytic activity and plays a role in substrate specificity, which depends upon the overall complex composition. The SPTLC1-SPTLC2-SPTSSA complex shows a strong preference for C16-CoA substrate, while the SPTLC1-SPTLC3-SPTSSA isozyme uses both C14-CoA and C16-CoA as substrates, with a slight preference for C14-CoA. Independently of its action as a SPT component, may be involved in MBOAT7 localization to mitochondria-associated membranes, a membrane bridge between the endoplasmic reticulum and mitochondria, may hence affect MBOAT7-catalyzed incorporation of arachidonic acid into phosphatidylinositol. The protein is Serine palmitoyltransferase small subunit A-A (sptssa-a) of Xenopus laevis (African clawed frog).